Consider the following 154-residue polypeptide: 6,7-dimethyl-8-ribityllumazine synthase (154 aa).

5-amino-6-(D-ribitylamino)uracil contacts are provided by residues Phe-15, 47 to 49 (TFD), and 71 to 73 (AVI). Residue 76 to 77 (ET) coordinates (2S)-2-hydroxy-3-oxobutyl phosphate. The active-site Proton donor is the His-79. Leu-104 serves as a coordination point for 5-amino-6-(D-ribitylamino)uracil. A (2S)-2-hydroxy-3-oxobutyl phosphate-binding site is contributed by Arg-119.

This sequence belongs to the DMRL synthase family.

The catalysed reaction is (2S)-2-hydroxy-3-oxobutyl phosphate + 5-amino-6-(D-ribitylamino)uracil = 6,7-dimethyl-8-(1-D-ribityl)lumazine + phosphate + 2 H2O + H(+). It participates in cofactor biosynthesis; riboflavin biosynthesis; riboflavin from 2-hydroxy-3-oxobutyl phosphate and 5-amino-6-(D-ribitylamino)uracil: step 1/2. Catalyzes the formation of 6,7-dimethyl-8-ribityllumazine by condensation of 5-amino-6-(D-ribitylamino)uracil with 3,4-dihydroxy-2-butanone 4-phosphate. This is the penultimate step in the biosynthesis of riboflavin. The protein is 6,7-dimethyl-8-ribityllumazine synthase of Saccharolobus solfataricus (strain ATCC 35092 / DSM 1617 / JCM 11322 / P2) (Sulfolobus solfataricus).